We begin with the raw amino-acid sequence, 1008 residues long: Translation initiation factor IF-2 (1008 aa).

3 disordered regions span residues alanine 113–valine 136, aspartate 153–proline 235, and glycine 253–aspartate 405. Composition is skewed to basic and acidic residues over residues aspartate 153–proline 180 and proline 189–threonine 213. Low complexity-rich tracts occupy residues glycine 294–glutamine 329 and glycine 342–proline 358. Residues alanine 365–lysine 381 show a composition bias toward basic and acidic residues. A tr-type G domain is found at aspartate 507–lysine 677. The interval glycine 516–threonine 523 is G1. A GTP-binding site is contributed by glycine 516–threonine 523. The interval glycine 541–histidine 545 is G2. The interval aspartate 563–glycine 566 is G3. Residues aspartate 563–histidine 567 and asparagine 617–aspartate 620 contribute to the GTP site. A G4 region spans residues asparagine 617 to aspartate 620. The G5 stretch occupies residues serine 653 to lysine 655.

Belongs to the TRAFAC class translation factor GTPase superfamily. Classic translation factor GTPase family. IF-2 subfamily.

It localises to the cytoplasm. Functionally, one of the essential components for the initiation of protein synthesis. Protects formylmethionyl-tRNA from spontaneous hydrolysis and promotes its binding to the 30S ribosomal subunits. Also involved in the hydrolysis of GTP during the formation of the 70S ribosomal complex. The protein is Translation initiation factor IF-2 of Cytophaga hutchinsonii (strain ATCC 33406 / DSM 1761 / CIP 103989 / NBRC 15051 / NCIMB 9469 / D465).